The primary structure comprises 417 residues: FK506-binding protein 3 (417 aa).

Disordered stretches follow at residues 42 to 129 (SLDD…LSPE) and 191 to 307 (EGCG…DKPK). 3 stretches are compositionally biased toward acidic residues: residues 61-84 (FDDE…EESE), 99-120 (SEEE…EFEE), and 197-222 (CACD…DASD). Basic and acidic residues-rich tracts occupy residues 236-249 (ANEK…EPKA) and 256-307 (DQKD…DKPK). Residues 331 to 417 (GARVGMRYIG…TFDVKLVSLK (87 aa)) enclose the PPIase FKBP-type domain.

This sequence belongs to the FKBP-type PPIase family. FKBP3/4 subfamily.

The protein resides in the nucleus. It is found in the nucleolus. The catalysed reaction is [protein]-peptidylproline (omega=180) = [protein]-peptidylproline (omega=0). Its activity is regulated as follows. Inhibited by both FK506 and rapamycin. In terms of biological role, PPIases accelerate the folding of proteins. It catalyzes the cis-trans isomerization of proline imidic peptide bonds in oligopeptides. This chain is FK506-binding protein 3 (FPR3), found in Eremothecium gossypii (strain ATCC 10895 / CBS 109.51 / FGSC 9923 / NRRL Y-1056) (Yeast).